A 179-amino-acid chain; its full sequence is X-linked lymphocyte-regulated protein 5C (179 aa).

A compositionally biased stretch (basic and acidic residues) spans 1 to 11 (MSNKEQKDMKK). The segment at 1–75 (MSNKEQKDMK…MQDFKGDDGT (75 aa)) is disordered. Over residues 42 to 53 (GTSGMGSHSSGS) the composition is skewed to low complexity. The segment covering 56–75 (QEAREPVQKKMQDFKGDDGT) has biased composition (basic and acidic residues). Residues 146 to 175 (ITQQQMKILQTAIEDHETKLKNAKDMCDTF) are a coiled coil.

Belongs to the XLR/SYCP3 family. In terms of tissue distribution, expressed in testis (at protein level). Also expressed in ovary. Not detected in other tissues tested.

The protein localises to the nucleus. Its subcellular location is the chromosome. This Mus musculus (Mouse) protein is X-linked lymphocyte-regulated protein 5C.